The chain runs to 215 residues: UPF0056 membrane protein YhcE (215 aa).

The next 6 helical transmembrane spans lie at 14 to 34 (FFIG…FISM), 54 to 74 (VAII…LFGI), 81 to 101 (IAGG…KLGE), 120 to 140 (VVPL…TIVW), 147 to 167 (ISYL…CWGL), and 189 to 209 (IMGL…IKGI).

The protein belongs to the UPF0056 (MarC) family.

The protein resides in the cell membrane. The chain is UPF0056 membrane protein YhcE (ychE) from Escherichia coli (strain K12).